A 219-amino-acid polypeptide reads, in one-letter code: RNA-free ribonuclease P (219 aa).

The protein belongs to the HARP family.

It catalyses the reaction Endonucleolytic cleavage of RNA, removing 5'-extranucleotides from tRNA precursor.. In terms of biological role, RNA-free RNase P that catalyzes the removal of the 5'-leader sequence from pre-tRNA to produce the mature 5'-terminus. The sequence is that of RNA-free ribonuclease P from Staphylothermus marinus (strain ATCC 43588 / DSM 3639 / JCM 9404 / F1).